The primary structure comprises 454 residues: Glutamyl-tRNA reductase (454 aa).

Residues 49–52 (TCNR), S109, 114–116 (ETQ), and Q120 contribute to the substrate site. Catalysis depends on C50, which acts as the Nucleophile. 189–194 (GAGKMS) contacts NADP(+). The segment covering 432–442 (DHAEQSWKEGQ) has biased composition (basic and acidic residues). A disordered region spans residues 432–454 (DHAEQSWKEGQRPSLNQGMALRT).

The protein belongs to the glutamyl-tRNA reductase family. As to quaternary structure, homodimer.

It catalyses the reaction (S)-4-amino-5-oxopentanoate + tRNA(Glu) + NADP(+) = L-glutamyl-tRNA(Glu) + NADPH + H(+). The protein operates within porphyrin-containing compound metabolism; protoporphyrin-IX biosynthesis; 5-aminolevulinate from L-glutamyl-tRNA(Glu): step 1/2. Its function is as follows. Catalyzes the NADPH-dependent reduction of glutamyl-tRNA(Glu) to glutamate 1-semialdehyde (GSA). This Shouchella clausii (strain KSM-K16) (Alkalihalobacillus clausii) protein is Glutamyl-tRNA reductase.